The chain runs to 480 residues: V-type ATP synthase beta chain 2 (480 aa).

This sequence belongs to the ATPase alpha/beta chains family.

Its function is as follows. Produces ATP from ADP in the presence of a proton gradient across the membrane. The V-type beta chain is a regulatory subunit. This Treponema pallidum (strain Nichols) protein is V-type ATP synthase beta chain 2 (atpB2).